The sequence spans 166 residues: Methylmalonyl-CoA epimerase, mitochondrial (166 aa).

The N-terminal 23 residues, 1–23, are a transit peptide targeting the mitochondrion; sequence MFKQLIKTTLTNSRSFSTNTGSG. Residues 37–166 enclose the VOC domain; that stretch reads KLNHVAIATP…NGVLVELEEK (130 aa). His-40, His-112, and Glu-162 together coordinate Co(2+).

It belongs to the methylmalonyl-CoA epimerase family.

The protein localises to the mitochondrion. It catalyses the reaction (R)-methylmalonyl-CoA = (S)-methylmalonyl-CoA. Its function is as follows. Methylmalonyl-CoA epimerase involved in propionyl-CoA metabolism. This chain is Methylmalonyl-CoA epimerase, mitochondrial (mcee), found in Dictyostelium discoideum (Social amoeba).